Reading from the N-terminus, the 338-residue chain is Fructose-1,6-bisphosphatase class 1 1 (338 aa).

Residues E91, D113, L115, and D116 each coordinate Mg(2+). Substrate is bound by residues 116–119 (DGSS), N208, and K274. Residue E280 coordinates Mg(2+).

The protein belongs to the FBPase class 1 family. Homotetramer. The cofactor is Mg(2+).

The protein resides in the cytoplasm. The enzyme catalyses beta-D-fructose 1,6-bisphosphate + H2O = beta-D-fructose 6-phosphate + phosphate. Its pathway is carbohydrate biosynthesis; gluconeogenesis. This chain is Fructose-1,6-bisphosphatase class 1 1, found in Cupriavidus metallidurans (strain ATCC 43123 / DSM 2839 / NBRC 102507 / CH34) (Ralstonia metallidurans).